We begin with the raw amino-acid sequence, 269 residues long: Putative hydro-lyase Atu3911 (269 aa).

This sequence belongs to the D-glutamate cyclase family.

This is Putative hydro-lyase Atu3911 from Agrobacterium fabrum (strain C58 / ATCC 33970) (Agrobacterium tumefaciens (strain C58)).